The sequence spans 305 residues: Aspartate carbamoyltransferase catalytic subunit (305 aa).

The carbamoyl phosphate site is built by Arg-56 and Thr-57. Lys-84 serves as a coordination point for L-aspartate. Residues Arg-106, His-136, and Gln-139 each contribute to the carbamoyl phosphate site. L-aspartate contacts are provided by Arg-169 and Arg-221. 2 residues coordinate carbamoyl phosphate: Ala-262 and Pro-263.

Belongs to the aspartate/ornithine carbamoyltransferase superfamily. ATCase family. As to quaternary structure, heterododecamer (2C3:3R2) of six catalytic PyrB chains organized as two trimers (C3), and six regulatory PyrI chains organized as three dimers (R2).

The catalysed reaction is carbamoyl phosphate + L-aspartate = N-carbamoyl-L-aspartate + phosphate + H(+). The protein operates within pyrimidine metabolism; UMP biosynthesis via de novo pathway; (S)-dihydroorotate from bicarbonate: step 2/3. Catalyzes the condensation of carbamoyl phosphate and aspartate to form carbamoyl aspartate and inorganic phosphate, the committed step in the de novo pyrimidine nucleotide biosynthesis pathway. This is Aspartate carbamoyltransferase catalytic subunit from Streptococcus sanguinis (strain SK36).